Reading from the N-terminus, the 566-residue chain is DNA ligase B (566 aa).

Catalysis depends on Lys-125, which acts as the N6-AMP-lysine intermediate.

Belongs to the NAD-dependent DNA ligase family. LigB subfamily.

The enzyme catalyses NAD(+) + (deoxyribonucleotide)n-3'-hydroxyl + 5'-phospho-(deoxyribonucleotide)m = (deoxyribonucleotide)n+m + AMP + beta-nicotinamide D-nucleotide.. Its function is as follows. Catalyzes the formation of phosphodiester linkages between 5'-phosphoryl and 3'-hydroxyl groups in double-stranded DNA using NAD as a coenzyme and as the energy source for the reaction. The sequence is that of DNA ligase B from Pseudomonas putida (strain GB-1).